Reading from the N-terminus, the 286-residue chain is MTILNKIVKVGNIEVANDKPFTLFGGMNVLESRDMAMRVCEQYVEVTNKLGVPYVFKASFDKANRSSIHSYRGPGMEEGLKIFQELKDTFGVSIITDVHEIYQCKPVAEVVDIIQLPAFLARQTDLVEAMARTGVVINVKKPQFLSPGQMGNIVEKIAECGNENVILCDRGTNFGYDNLVVDMLGFNIMKKVSKGCPVIFDVTHSLQCRDPFGAASGGRRDQVTELARSGMAIGLAGLFLEAHPDPNSAKCDGPSALPLSKLEAFVSQMKAIDDLVKSFEEIDTSR.

The protein belongs to the KdsA family.

It is found in the cytoplasm. The catalysed reaction is D-arabinose 5-phosphate + phosphoenolpyruvate + H2O = 3-deoxy-alpha-D-manno-2-octulosonate-8-phosphate + phosphate. The protein operates within carbohydrate biosynthesis; 3-deoxy-D-manno-octulosonate biosynthesis; 3-deoxy-D-manno-octulosonate from D-ribulose 5-phosphate: step 2/3. Its pathway is bacterial outer membrane biogenesis; lipopolysaccharide biosynthesis. This Actinobacillus pleuropneumoniae (Haemophilus pleuropneumoniae) protein is 2-dehydro-3-deoxyphosphooctonate aldolase (kdsA).